An 811-amino-acid polypeptide reads, in one-letter code: Phenylalanine--tRNA ligase beta subunit (811 aa).

Positions 39–151 (RTWAAGVVVG…AGLQAGQPVG (113 aa)) constitute a tRNA-binding domain. The 87-residue stretch at 409 to 495 (EPEHSITLRL…RLYGYDNFGE (87 aa)) folds into the B5 domain. Positions 473, 479, 482, and 483 each coordinate Mg(2+). Residues 717–810 (SSFPASDRDL…LVERFRVTLR (94 aa)) form the FDX-ACB domain.

The protein belongs to the phenylalanyl-tRNA synthetase beta subunit family. Type 1 subfamily. As to quaternary structure, tetramer of two alpha and two beta subunits. The cofactor is Mg(2+).

It is found in the cytoplasm. It catalyses the reaction tRNA(Phe) + L-phenylalanine + ATP = L-phenylalanyl-tRNA(Phe) + AMP + diphosphate + H(+). This Synechococcus sp. (strain ATCC 27144 / PCC 6301 / SAUG 1402/1) (Anacystis nidulans) protein is Phenylalanine--tRNA ligase beta subunit.